Consider the following 316-residue polypeptide: 4-hydroxy-3-methylbut-2-enyl diphosphate reductase (316 aa).

C12 lines the [4Fe-4S] cluster pocket. (2E)-4-hydroxy-3-methylbut-2-enyl diphosphate-binding residues include H41 and H74. Dimethylallyl diphosphate-binding residues include H41 and H74. The isopentenyl diphosphate site is built by H41 and H74. C96 lines the [4Fe-4S] cluster pocket. H124 provides a ligand contact to (2E)-4-hydroxy-3-methylbut-2-enyl diphosphate. H124 is a dimethylallyl diphosphate binding site. H124 is an isopentenyl diphosphate binding site. E126 functions as the Proton donor in the catalytic mechanism. T167 serves as a coordination point for (2E)-4-hydroxy-3-methylbut-2-enyl diphosphate. C197 contacts [4Fe-4S] cluster. Residues S225, S226, N227, and S269 each contribute to the (2E)-4-hydroxy-3-methylbut-2-enyl diphosphate site. Residues S225, S226, N227, and S269 each contribute to the dimethylallyl diphosphate site. Positions 225, 226, 227, and 269 each coordinate isopentenyl diphosphate.

Belongs to the IspH family. In terms of assembly, homodimer. The cofactor is [4Fe-4S] cluster.

The enzyme catalyses isopentenyl diphosphate + 2 oxidized [2Fe-2S]-[ferredoxin] + H2O = (2E)-4-hydroxy-3-methylbut-2-enyl diphosphate + 2 reduced [2Fe-2S]-[ferredoxin] + 2 H(+). It carries out the reaction dimethylallyl diphosphate + 2 oxidized [2Fe-2S]-[ferredoxin] + H2O = (2E)-4-hydroxy-3-methylbut-2-enyl diphosphate + 2 reduced [2Fe-2S]-[ferredoxin] + 2 H(+). It functions in the pathway isoprenoid biosynthesis; dimethylallyl diphosphate biosynthesis; dimethylallyl diphosphate from (2E)-4-hydroxy-3-methylbutenyl diphosphate: step 1/1. The protein operates within isoprenoid biosynthesis; isopentenyl diphosphate biosynthesis via DXP pathway; isopentenyl diphosphate from 1-deoxy-D-xylulose 5-phosphate: step 6/6. Functionally, catalyzes the conversion of 1-hydroxy-2-methyl-2-(E)-butenyl 4-diphosphate (HMBPP) into a mixture of isopentenyl diphosphate (IPP) and dimethylallyl diphosphate (DMAPP). Acts in the terminal step of the DOXP/MEP pathway for isoprenoid precursor biosynthesis. This chain is 4-hydroxy-3-methylbut-2-enyl diphosphate reductase, found in Sodalis glossinidius (strain morsitans).